A 272-amino-acid chain; its full sequence is ATP-dependent Clp protease proteolytic subunit, mitochondrial (272 aa).

The N-terminal 52 residues, 1 to 52, are a transit peptide targeting the mitochondrion; that stretch reads MWPRVLLGEARVAVDGCRALLSRLAVHFSPPWTAVSCSPLRRSLHGTATRAF. The active-site Nucleophile is Ser149. His174 is an active-site residue. Lys196 bears the N6-succinyllysine mark. Lys207 is modified (N6-acetyllysine). Positions 240 to 272 are disordered; the sequence is VLVHPPQDGEDEPELVQKETATAPTDPPAPTST.

It belongs to the peptidase S14 family. Fourteen CLPP subunits assemble into 2 heptameric rings which stack back to back to give a disk-like structure with a central cavity. Component of the ClpXP complex formed by the assembly of two CLPP heptameric rings with two CLPX hexameric rings, giving rise to a symmetrical structure with two central CLPP rings flanked by a CLPX ring at either end of the complex. As to expression, detected in liver (at protein level). High levels found in heart, liver and skeletal muscle.

The protein resides in the mitochondrion matrix. It carries out the reaction Hydrolysis of proteins to small peptides in the presence of ATP and magnesium. alpha-casein is the usual test substrate. In the absence of ATP, only oligopeptides shorter than five residues are hydrolyzed (such as succinyl-Leu-Tyr-|-NHMec, and Leu-Tyr-Leu-|-Tyr-Trp, in which cleavage of the -Tyr-|-Leu- and -Tyr-|-Trp bonds also occurs).. Functionally, protease component of the ClpXP complex that cleaves peptides and various proteins in an ATP-dependent process. Has low peptidase activity in the absence of CLPX. The ClpXP complex can degrade CSN1S1, CSN2 and CSN3, as well as synthetic peptides (in vitro) and may be responsible for a fairly general and central housekeeping function rather than for the degradation of specific substrates. Cleaves PINK1 in the mitochondrion. The polypeptide is ATP-dependent Clp protease proteolytic subunit, mitochondrial (Mus musculus (Mouse)).